A 142-amino-acid polypeptide reads, in one-letter code: Profilin (142 aa).

It belongs to the profilin family. In terms of assembly, occurs in many kinds of cells as a complex with monomeric actin in a 1:1 ratio. Expressed specifically in coelomocytes in response to injury.

The protein resides in the cytoplasm. It localises to the cytoskeleton. In terms of biological role, binds to actin and affects the structure of the cytoskeleton. At high concentrations, profilin prevents the polymerization of actin, whereas it enhances it at low concentrations. By binding to PIP2, it inhibits the formation of IP3 and DG. The protein is Profilin of Strongylocentrotus purpuratus (Purple sea urchin).